Consider the following 385-residue polypeptide: Single-stranded DNA-binding protein 4 (385 aa).

At M1 the chain carries N-acetylmethionine. The 33-residue stretch at 17–49 (AREKLALYVYEYLLHIGAQKSAQTFLSEIRWEK) folds into the LisH domain. Disordered stretches follow at residues 122–287 (FQGP…NSSE) and 331–363 (GSGD…GEMA). Residues 245–263 (SPSGNSIPYSSSSPGSYTG) are compositionally biased toward low complexity. Positions 267–277 (GGGPPGTPIMP) are enriched in pro residues. Phosphoserine is present on S341. Position 355 is a phosphothreonine (T355).

Its subcellular location is the nucleus. In Homo sapiens (Human), this protein is Single-stranded DNA-binding protein 4 (SSBP4).